The following is a 376-amino-acid chain: Queuine tRNA-ribosyltransferase (376 aa).

The active-site Proton acceptor is D89. Substrate contacts are provided by residues 89-93 (DSGGF), D143, Q187, and G214. Positions 245–251 (GVGKPQD) are RNA binding. D264 (nucleophile) is an active-site residue. Residues 269 to 273 (TRNAR) are RNA binding; important for wobble base 34 recognition. Zn(2+) contacts are provided by C302, C304, C307, and H333.

It belongs to the queuine tRNA-ribosyltransferase family. As to quaternary structure, homodimer. Within each dimer, one monomer is responsible for RNA recognition and catalysis, while the other monomer binds to the replacement base PreQ1. It depends on Zn(2+) as a cofactor.

It carries out the reaction 7-aminomethyl-7-carbaguanine + guanosine(34) in tRNA = 7-aminomethyl-7-carbaguanosine(34) in tRNA + guanine. It participates in tRNA modification; tRNA-queuosine biosynthesis. Catalyzes the base-exchange of a guanine (G) residue with the queuine precursor 7-aminomethyl-7-deazaguanine (PreQ1) at position 34 (anticodon wobble position) in tRNAs with GU(N) anticodons (tRNA-Asp, -Asn, -His and -Tyr). Catalysis occurs through a double-displacement mechanism. The nucleophile active site attacks the C1' of nucleotide 34 to detach the guanine base from the RNA, forming a covalent enzyme-RNA intermediate. The proton acceptor active site deprotonates the incoming PreQ1, allowing a nucleophilic attack on the C1' of the ribose to form the product. After dissociation, two additional enzymatic reactions on the tRNA convert PreQ1 to queuine (Q), resulting in the hypermodified nucleoside queuosine (7-(((4,5-cis-dihydroxy-2-cyclopenten-1-yl)amino)methyl)-7-deazaguanosine). This Erwinia tasmaniensis (strain DSM 17950 / CFBP 7177 / CIP 109463 / NCPPB 4357 / Et1/99) protein is Queuine tRNA-ribosyltransferase.